The primary structure comprises 389 residues: Major outer membrane porin (389 aa).

Positions 1 to 23 (MKKLLKSALLSAAFAGSVGSLQA) are cleaved as a signal peptide.

Belongs to the chlamydial porin (CP) (TC 1.B.2) family. In terms of assembly, part of a disulfide cross-linked outer membrane complex (COMC) composed of the major outer membrane porin (MOMP), the small cysteine-rich protein (OmcA) and the large cysteine-rich periplasmic protein (OmcB).

The protein localises to the cell outer membrane. Functionally, in elementary bodies (EBs, the infectious stage, which is able to survive outside the host cell) provides the structural integrity of the outer envelope through disulfide cross-links with the small cysteine-rich protein and the large cysteine-rich periplasmic protein. It has been described in publications as the Sarkosyl-insoluble COMC (Chlamydia outer membrane complex), and serves as the functional equivalent of peptidoglycan. Its function is as follows. Permits diffusion of specific solutes through the outer membrane. This is Major outer membrane porin (ompA) from Chlamydia pneumoniae (Chlamydophila pneumoniae).